The sequence spans 154 residues: Ribonuclease H (154 aa).

One can recognise an RNase H type-1 domain in the interval 1 to 142 (MLKHIDLYTD…CDELARDAAS (142 aa)). 4 residues coordinate Mg(2+): Asp10, Glu48, Asp70, and Asp134. Residues 126–147 (GHPENERCDELARDAASGKELA) show a composition bias toward basic and acidic residues. Residues 126-154 (GHPENERCDELARDAASGKELAEDTGYQP) are disordered.

Belongs to the RNase H family. As to quaternary structure, monomer. The cofactor is Mg(2+).

Its subcellular location is the cytoplasm. It catalyses the reaction Endonucleolytic cleavage to 5'-phosphomonoester.. Its function is as follows. Endonuclease that specifically degrades the RNA of RNA-DNA hybrids. The protein is Ribonuclease H of Aeromonas salmonicida (strain A449).